A 483-amino-acid chain; its full sequence is Isocitrate dehydrogenase [NADP] (483 aa).

Residue threonine 74 coordinates NADP(+). Serine 83, asparagine 85, arginine 89, arginine 99, and arginine 121 together coordinate D-threo-isocitrate. Residue aspartate 232 coordinates Mg(2+). Residues 264-270 (HGSAPDI) and asparagine 277 each bind NADP(+).

The protein belongs to the isocitrate and isopropylmalate dehydrogenases family. In terms of assembly, homodimer. Mg(2+) serves as cofactor. It depends on Mn(2+) as a cofactor.

The catalysed reaction is D-threo-isocitrate + NADP(+) = 2-oxoglutarate + CO2 + NADPH. Catalyzes the oxidative decarboxylation of isocitrate to 2-oxoglutarate and carbon dioxide with the concomitant reduction of NADP(+). The chain is Isocitrate dehydrogenase [NADP] (icd) from Rickettsia conorii (strain ATCC VR-613 / Malish 7).